A 99-amino-acid polypeptide reads, in one-letter code: Large ribosomal subunit protein uL23 (99 aa).

The protein belongs to the universal ribosomal protein uL23 family. As to quaternary structure, part of the 50S ribosomal subunit. Contacts protein L29, and trigger factor when it is bound to the ribosome.

In terms of biological role, one of the early assembly proteins it binds 23S rRNA. One of the proteins that surrounds the polypeptide exit tunnel on the outside of the ribosome. Forms the main docking site for trigger factor binding to the ribosome. The sequence is that of Large ribosomal subunit protein uL23 from Rhodopseudomonas palustris (strain BisB18).